A 540-amino-acid chain; its full sequence is Cystathionine gamma-synthase 1, chloroplastic (540 aa).

Residues 1–78 (MAVSSCARAF…RNCSNIGVAQ (78 aa)) constitute a chloroplast transit peptide. Residues Tyr-203, Arg-205, Gly-233, Met-234, Tyr-258, Ser-353, and Thr-355 each coordinate pyridoxal 5'-phosphate. Lys-356 is modified (N6-(pyridoxal phosphate)lysine).

This sequence belongs to the trans-sulfuration enzymes family. Forms homotetramers composed of 2 homodimers. The cofactor is pyridoxal 5'-phosphate.

It localises to the plastid. The protein localises to the chloroplast. The catalysed reaction is O-phospho-L-homoserine + L-cysteine = L,L-cystathionine + phosphate. It carries out the reaction O-succinyl-L-homoserine + L-cysteine = L,L-cystathionine + succinate + H(+). It participates in amino-acid biosynthesis; L-methionine biosynthesis via de novo pathway; L-cystathionine from O-succinyl-L-homoserine: step 1/1. With respect to regulation, irreversibly inactivated by DL-propargylglycine. In terms of biological role, catalyzes the first committed step of methionine (Met) biosynthesis. Catalyzes the formation of L-cystathionine from homoserine esters and L-cysteine, via a gamma-replacement reaction. This chain is Cystathionine gamma-synthase 1, chloroplastic, found in Nicotiana tabacum (Common tobacco).